Here is a 207-residue protein sequence, read N- to C-terminus: Ras-related protein Rab-7a (207 aa).

T2 carries the post-translational modification N-acetylthreonine. GTP-binding residues include S17, G18, V19, G20, K21, T22, S23, S34, N35, Y37, and T40. Mg(2+) is bound at residue T22. The short motif at 28–41 (YVNKKFSNQYKATI) is the Switch 1 element. Residues T40 and D63 each contribute to the Mg(2+) site. Position 66 (G66) interacts with GTP. The short motif at 67-82 (QERFQSLGVAFYRGAD) is the Switch 2 element. S72 carries the post-translational modification Phosphoserine. Residues N125, K126, D128, A156, and K157 each contribute to the GTP site. Glycyl lysine isopeptide (Lys-Gly) (interchain with G-Cter in ubiquitin) cross-links involve residues K191 and K194. 2 S-geranylgeranyl cysteine lipidation sites follow: C205 and C207. Position 207 is a cysteine methyl ester (C207).

The protein belongs to the small GTPase superfamily. Rab family. In terms of assembly, interacts with NTRK1/TRKA. Interacts with RILP. Interacts with PSMA7. Interacts with RNF115. Interacts with and FYCO1. Interacts with the PIK3C3/VPS34-PIK3R4 complex. The GTP-bound form interacts with OSBPL1A. The GTP-bound form interacts with RAC1. Interacts with CLN3. Interacts with CHM, the substrate-binding subunit of the Rab geranylgeranyltransferase complex. Interacts with C9orf72. Does not interact with HPS4 and the BLOC-3 complex (heterodimer of HPS1 and HPS4). Interacts with CLN5. Interacts with PLEKHM1 (via N- and C-terminus). Interacts with PRPH; the interaction is direct. Interacts with VPS13A. The GDP-bound form interacts with RIMOC1. Interacts with the MON1A-CCZ1B complex and this interaction is enhanced in the presence of RIMOC1. Interacts with VPS39 and VPS41. Forms a ternary complex with LAMP2 and RUFY4; the interaction with LAMP2 is mediated by RUFY4 (via RUN and coiled coil domains). Mg(2+) serves as cofactor. In terms of processing, deubiquitination at Lys-191 and Lys-194 by USP32. Phosphorylated at Ser-72 by LRRK1; phosphorylation is dependent on protein kinase C (PKC) activation of LRRK1. Post-translationally, prenylated. Prenylation is required for association with cellular membranes. As to expression, expressed in osteoclasts and in neurons.

Its subcellular location is the cytoplasmic vesicle. It is found in the phagosome membrane. The protein resides in the late endosome membrane. The protein localises to the lysosome membrane. It localises to the melanosome membrane. Its subcellular location is the autophagosome membrane. It is found in the lipid droplet. The protein resides in the endosome membrane. The protein localises to the mitochondrion membrane. It catalyses the reaction GTP + H2O = GDP + phosphate + H(+). Regulated by guanine nucleotide exchange factors (GEFs) which promote the exchange of bound GDP for free GTP. Regulated by GTPase activating proteins (GAPs) which increase the GTP hydrolysis activity. Inhibited by GDP dissociation inhibitors (GDIs). The small GTPases Rab are key regulators of intracellular membrane trafficking, from the formation of transport vesicles to their fusion with membranes. Rabs cycle between an inactive GDP-bound form and an active GTP-bound form that is able to recruit to membranes different sets of downstream effectors directly responsible for vesicle formation, movement, tethering and fusion. In its active state, RAB7A binds to a variety of effector proteins playing a key role in the regulation of endo-lysosomal trafficking. Governs early-to-late endosomal maturation, microtubule minus-end as well as plus-end directed endosomal migration and positioning, and endosome-lysosome transport through different protein-protein interaction cascades. Also plays a central role in growth-factor-mediated cell signaling, nutrient-transporter-mediated nutrient uptake, neurotrophin transport in the axons of neurons and lipid metabolism. Also involved in regulation of some specialized endosomal membrane trafficking, such as maturation of melanosomes, pathogen-induced phagosomes (or vacuoles) and autophagosomes. Plays a role in the maturation and acidification of phagosomes that engulf pathogens, such as S.aureus and Mycobacteria. Plays a role in the fusion of phagosomes with lysosomes. In concert with RAC1, plays a role in regulating the formation of RBs (ruffled borders) in osteoclasts. Controls the endosomal trafficking and neurite outgrowth signaling of NTRK1/TRKA. Regulates the endocytic trafficking of the EGF-EGFR complex by regulating its lysosomal degradation. Involved in the ADRB2-stimulated lipolysis through lipophagy, a cytosolic lipase-independent autophagic pathway. Required for the exosomal release of SDCBP, CD63 and syndecan. Required for vesicular trafficking and cell surface expression of ACE2. May play a role in PRPH neuronal intermediate filament assembly. This chain is Ras-related protein Rab-7a, found in Rattus norvegicus (Rat).